The following is a 298-amino-acid chain: Tyrosine recombinase XerD (298 aa).

One can recognise a Core-binding (CB) domain in the interval 3–88 (SSHNNLLQNF…AIRQFYKFLK (86 aa)). The Tyr recombinase domain maps to 109-292 (SIPDYLTQDE…ANKTLREVHK (184 aa)). Active-site residues include Arg149, Lys173, His244, Arg247, and His270. Tyr279 functions as the O-(3'-phospho-DNA)-tyrosine intermediate in the catalytic mechanism.

Belongs to the 'phage' integrase family. XerD subfamily. As to quaternary structure, forms a cyclic heterotetrameric complex composed of two molecules of XerC and two molecules of XerD.

The protein resides in the cytoplasm. Functionally, site-specific tyrosine recombinase, which acts by catalyzing the cutting and rejoining of the recombining DNA molecules. The XerC-XerD complex is essential to convert dimers of the bacterial chromosome into monomers to permit their segregation at cell division. It also contributes to the segregational stability of plasmids. In Leptospira interrogans serogroup Icterohaemorrhagiae serovar copenhageni (strain Fiocruz L1-130), this protein is Tyrosine recombinase XerD.